The primary structure comprises 103 residues: A-type ATP synthase subunit F (103 aa).

It belongs to the V-ATPase F subunit family. Has multiple subunits with at least A(3), B(3), C, D, E, F, H, I and proteolipid K(x).

The protein localises to the cell membrane. Functionally, component of the A-type ATP synthase that produces ATP from ADP in the presence of a proton gradient across the membrane. The sequence is that of A-type ATP synthase subunit F from Pyrococcus furiosus (strain ATCC 43587 / DSM 3638 / JCM 8422 / Vc1).